Reading from the N-terminus, the 181-residue chain is Adenylate kinase (181 aa).

10-15 (GAGKGT) lines the ATP pocket. Positions 30-59 (STGDLFRANISQQTPLGREAQKYMDAGDLV) are NMP. Residues Thr-31, Arg-36, 57-59 (DLV), 85-88 (GYPR), and Gln-92 each bind AMP. The segment at 126–132 (ARGRNDD) is LID. Arg-127 provides a ligand contact to ATP. The AMP site is built by Arg-129 and Arg-140. Gly-166 contributes to the ATP binding site.

The protein belongs to the adenylate kinase family. In terms of assembly, monomer.

Its subcellular location is the cytoplasm. It catalyses the reaction AMP + ATP = 2 ADP. It functions in the pathway purine metabolism; AMP biosynthesis via salvage pathway; AMP from ADP: step 1/1. Catalyzes the reversible transfer of the terminal phosphate group between ATP and AMP. Plays an important role in cellular energy homeostasis and in adenine nucleotide metabolism. This chain is Adenylate kinase, found in Nocardia farcinica (strain IFM 10152).